The following is an 811-amino-acid chain: DNA mismatch repair protein MutS (811 aa).

583–590 (GPNMAGKS) serves as a coordination point for ATP.

Belongs to the DNA mismatch repair MutS family.

In terms of biological role, this protein is involved in the repair of mismatches in DNA. It is possible that it carries out the mismatch recognition step. This protein has a weak ATPase activity. The chain is DNA mismatch repair protein MutS from Thermus thermophilus (strain ATCC BAA-163 / DSM 7039 / HB27).